Consider the following 457-residue polypeptide: Cysteine--tRNA ligase (457 aa).

Cys-28 contributes to the Zn(2+) binding site. The 'HIGH' region signature appears at 30-40; it reads MTVYDYCHLGH. Zn(2+) is bound by residues Cys-209, His-234, and Glu-238. The 'KMSKS' region motif lies at 266–270; it reads KMSKS. Lys-269 serves as a coordination point for ATP.

Belongs to the class-I aminoacyl-tRNA synthetase family. Monomer. Requires Zn(2+) as cofactor.

Its subcellular location is the cytoplasm. It carries out the reaction tRNA(Cys) + L-cysteine + ATP = L-cysteinyl-tRNA(Cys) + AMP + diphosphate. The sequence is that of Cysteine--tRNA ligase from Laribacter hongkongensis (strain HLHK9).